Consider the following 300-residue polypeptide: 7-methylguanosine phosphate-specific 5'-nucleotidase (300 aa).

Asp-41 (nucleophile) is an active-site residue. Mg(2+) is bound by residues Asp-41 and Asp-43. Asp-43 functions as the Proton donor in the catalytic mechanism. Glu-88 serves as a coordination point for CMP. Glu-88 is a binding site for N(7)-methyl-GMP. Substrate contacts are provided by residues 156–157 (SA) and Lys-205. Asp-230 contacts Mg(2+). At Lys-256 the chain carries N6-acetyllysine.

It belongs to the pyrimidine 5'-nucleotidase family. In terms of assembly, monomer.

The protein localises to the cytoplasm. It carries out the reaction N(7)-methyl-GMP + H2O = N(7)-methylguanosine + phosphate. The catalysed reaction is CMP + H2O = cytidine + phosphate. The enzyme catalyses a ribonucleoside 5'-phosphate + H2O = a ribonucleoside + phosphate. Functionally, specifically hydrolyzes 7-methylguanosine monophosphate (m(7)GMP) to 7-methylguanosine and inorganic phosphate. The specific activity for m(7)GMP may protect cells against undesired salvage of m(7)GMP and its incorporation into nucleic acids. Also has weak activity for CMP. UMP and purine nucleotides are poor substrates. This is 7-methylguanosine phosphate-specific 5'-nucleotidase (NT5C3B) from Homo sapiens (Human).